The chain runs to 216 residues: MTSALHHIPHRTKKLPPLRVGIGGPVGSGKTTLLEMLCKAMRDKYDLVAITNDIYTKEDQRLLTVAGALPAERIMGVETGGCPHTAIREDASINLEAIDRMLEDFPDADVVFVESGGDNLAATFSPELSDLTIYVIDVAAGEKIPRKGGPGITKSDLFVINKTDLAPYVGANLDVMEQDTQRMRRQRPYVMTNLKTHTGVAEVVAFIEKRGMLTAD.

A GTP-binding site is contributed by 24-31; sequence GPVGSGKT.

The protein belongs to the SIMIBI class G3E GTPase family. UreG subfamily. As to quaternary structure, homodimer. UreD, UreF and UreG form a complex that acts as a GTP-hydrolysis-dependent molecular chaperone, activating the urease apoprotein by helping to assemble the nickel containing metallocenter of UreC. The UreE protein probably delivers the nickel.

Its subcellular location is the cytoplasm. Facilitates the functional incorporation of the urease nickel metallocenter. This process requires GTP hydrolysis, probably effectuated by UreG. The protein is Urease accessory protein UreG of Variovorax paradoxus (strain S110).